Consider the following 113-residue polypeptide: FK506-binding protein 1B (113 aa).

Residues glycine 19 to glutamine 113 enclose the PPIase FKBP-type domain.

This sequence belongs to the FKBP-type PPIase family. FKBP1 subfamily.

Its subcellular location is the cytoplasm. It carries out the reaction [protein]-peptidylproline (omega=180) = [protein]-peptidylproline (omega=0). Its activity is regulated as follows. Inhibited by both FK506 and rapamycin. In terms of biological role, PPIases accelerate the folding of proteins. It catalyzes the cis-trans isomerization of proline imidic peptide bonds in oligopeptides. This chain is FK506-binding protein 1B (fkr-3), found in Neurospora crassa (strain ATCC 24698 / 74-OR23-1A / CBS 708.71 / DSM 1257 / FGSC 987).